The sequence spans 1284 residues: Collagen alpha-1(XX) chain (1284 aa).

The first 22 residues, 1-22, serve as a signal peptide directing secretion; that stretch reads MSSGDPAHLGLCLWLWLGATLG. Residues 28 to 119 form the Fibronectin type-III 1 domain; the sequence is ASGLLRLAVL…EFVIEDLKSS (92 aa). The tract at residues 122–171 is disordered; that stretch reads DRSSQRPLGSGAPEPTPSHTGSPDPEQASEPQVAFTPSQDPRTPAGPQFR. One can recognise a VWFA domain in the interval 179-354; the sequence is DMVFLVDGSW…GALAGLLSRL (176 aa). Fibronectin type-III domains follow at residues 379 to 468, 469 to 559, 560 to 647, 649 to 738, and 743 to 833; these read APTS…APLP, PPRA…TLAP, PRHL…TKKA, SPSQ…TPST, and PPSN…ACPA. N607 is a glycosylation site (N-linked (GlcNAc...) asparagine). Residues 842–1037 enclose the Laminin G-like domain; that stretch reads GFDLMVAFSL…LQMLQIVCSD (196 aa). Disordered stretches follow at residues 1065-1190 and 1212-1284; these read SCSS…EKGE and SFHE…GLWE. Residues 1071–1082 show a composition bias toward pro residues; sequence PGPPGPQGPPGL. Collagen-like domains are found at residues 1071–1127 and 1133–1190; these read PGPP…IPGR and PKGM…EKGE. 2 stretches are compositionally biased toward low complexity: residues 1112–1125 and 1166–1181; these read LPGLQGHPGHQGIP and ERGPPGTVGPTGLPGP. Residues 1271–1284 show a composition bias toward polar residues; sequence SPGQQGASTQGLWE.

High expression in heart, lung, liver, skeletal muscle, kidney, pancreas, spleen, testis, ovary, subthalamic nucleus and fetal liver. Weak expression in other tissues tested.

Its subcellular location is the secreted. The protein localises to the extracellular space. In terms of biological role, probable collagen protein. In Homo sapiens (Human), this protein is Collagen alpha-1(XX) chain (COL20A1).